The primary structure comprises 321 residues: MDRGRCANMLKSLQRTLAKCQKSPSTNHWQCFKRNFTSIRATKYPGRSNSTFHYWPWFAASTLLATSLYYRDRPVQNDDKTDAFPSHTESIQVDSSVSDFPLTITALNFPVSTTFKLLGYGQRHVTFLRFKVYALGLYLAENDENLVSDTLNETYLHKYFLDVDDSKTPKENLARLLKRDDSKSVMMIDDLLDSGMRMLAKITPVRNTDFKHLKEGLVKTISKHPDVANNKDTLAKGLSELNDAFSRKGSVRKNDDLIIELLANGALQFSYHDSKNNEFEVMGVVNNQLVGKFLFSQYLCGEKSPSPQAKKTAIDKLITLL.

The N-terminal 72 residues, 1–72 (MDRGRCANML…LLATSLYYRD (72 aa)), are a transit peptide targeting the mitochondrion.

This sequence belongs to the AIM18/AIM46 family.

The protein localises to the mitochondrion. This chain is Altered inheritance of mitochondria protein 18, mitochondrial (AIM18), found in Saccharomyces cerevisiae (strain RM11-1a) (Baker's yeast).